We begin with the raw amino-acid sequence, 399 residues long: 4-hydroxy-3-methylbut-2-enyl diphosphate reductase (399 aa).

C66 serves as a coordination point for [4Fe-4S] cluster. Residue H96 participates in (2E)-4-hydroxy-3-methylbut-2-enyl diphosphate binding. A dimethylallyl diphosphate-binding site is contributed by H96. H96 lines the isopentenyl diphosphate pocket. C157 provides a ligand contact to [4Fe-4S] cluster. H185 contributes to the (2E)-4-hydroxy-3-methylbut-2-enyl diphosphate binding site. H185 is a binding site for dimethylallyl diphosphate. H185 lines the isopentenyl diphosphate pocket. The Proton donor role is filled by E187. T250 is a binding site for (2E)-4-hydroxy-3-methylbut-2-enyl diphosphate. Position 288 (C288) interacts with [4Fe-4S] cluster. (2E)-4-hydroxy-3-methylbut-2-enyl diphosphate-binding residues include S317, S318, N319, and S380. Residues S317, S318, N319, and S380 each coordinate dimethylallyl diphosphate. 4 residues coordinate isopentenyl diphosphate: S317, S318, N319, and S380.

This sequence belongs to the IspH family. Requires [4Fe-4S] cluster as cofactor.

It catalyses the reaction isopentenyl diphosphate + 2 oxidized [2Fe-2S]-[ferredoxin] + H2O = (2E)-4-hydroxy-3-methylbut-2-enyl diphosphate + 2 reduced [2Fe-2S]-[ferredoxin] + 2 H(+). The enzyme catalyses dimethylallyl diphosphate + 2 oxidized [2Fe-2S]-[ferredoxin] + H2O = (2E)-4-hydroxy-3-methylbut-2-enyl diphosphate + 2 reduced [2Fe-2S]-[ferredoxin] + 2 H(+). It functions in the pathway isoprenoid biosynthesis; dimethylallyl diphosphate biosynthesis; dimethylallyl diphosphate from (2E)-4-hydroxy-3-methylbutenyl diphosphate: step 1/1. It participates in isoprenoid biosynthesis; isopentenyl diphosphate biosynthesis via DXP pathway; isopentenyl diphosphate from 1-deoxy-D-xylulose 5-phosphate: step 6/6. Functionally, catalyzes the conversion of 1-hydroxy-2-methyl-2-(E)-butenyl 4-diphosphate (HMBPP) into a mixture of isopentenyl diphosphate (IPP) and dimethylallyl diphosphate (DMAPP). Acts in the terminal step of the DOXP/MEP pathway for isoprenoid precursor biosynthesis. The polypeptide is 4-hydroxy-3-methylbut-2-enyl diphosphate reductase (Parasynechococcus marenigrum (strain WH8102)).